The following is a 211-amino-acid chain: Arginine exporter protein ArgO (211 aa).

Helical transmembrane passes span 1 to 21, 37 to 57, 68 to 88, 111 to 131, 147 to 167, and 186 to 206; these read MLSYYFQGLVLGAAMILPLGP, LMIAMLCAVSDLLLICAGIFG, LLALVTWGGVAFLLWYGFGAL, IIATMLAVTWLNPHVYLDTFV, WFALGTVSASFLWFFGLALLA, and LVGLVMWFIAFQLAKEGIHHI.

This sequence belongs to the LysE/ArgO transporter (TC 2.A.75) family.

The protein resides in the cell inner membrane. It catalyses the reaction L-arginine(in) = L-arginine(out). Functionally, involved in the export of arginine. Important to control the intracellular level of arginine and the correct balance between arginine and lysine. This chain is Arginine exporter protein ArgO, found in Enterobacter sp. (strain 638).